Consider the following 155-residue polypeptide: Small ribosomal subunit protein uS7 (155 aa).

This sequence belongs to the universal ribosomal protein uS7 family. As to quaternary structure, part of the 30S ribosomal subunit. Contacts proteins S9 and S11.

One of the primary rRNA binding proteins, it binds directly to 16S rRNA where it nucleates assembly of the head domain of the 30S subunit. Is located at the subunit interface close to the decoding center, probably blocks exit of the E-site tRNA. This chain is Small ribosomal subunit protein uS7, found in Mycoplasma mycoides subsp. mycoides SC (strain CCUG 32753 / NCTC 10114 / PG1).